A 475-amino-acid polypeptide reads, in one-letter code: Ribulose bisphosphate carboxylase large chain (475 aa).

Residues 1 to 2 (MS) constitute a propeptide that is removed on maturation. Residue Pro-3 is modified to N-acetylproline. N6,N6,N6-trimethyllysine is present on Lys-14. The substrate site is built by Asn-123 and Thr-173. Lys-175 acts as the Proton acceptor in catalysis. Residue Lys-177 coordinates substrate. Positions 201, 203, and 204 each coordinate Mg(2+). An N6-carboxylysine modification is found at Lys-201. His-294 (proton acceptor) is an active-site residue. The substrate site is built by Arg-295, His-327, and Ser-379.

Belongs to the RuBisCO large chain family. Type I subfamily. In terms of assembly, heterohexadecamer of 8 large chains and 8 small chains; disulfide-linked. The disulfide link is formed within the large subunit homodimers. It depends on Mg(2+) as a cofactor. In terms of processing, the disulfide bond which can form in the large chain dimeric partners within the hexadecamer appears to be associated with oxidative stress and protein turnover.

It localises to the plastid. The protein localises to the chloroplast. The enzyme catalyses 2 (2R)-3-phosphoglycerate + 2 H(+) = D-ribulose 1,5-bisphosphate + CO2 + H2O. It carries out the reaction D-ribulose 1,5-bisphosphate + O2 = 2-phosphoglycolate + (2R)-3-phosphoglycerate + 2 H(+). Its function is as follows. RuBisCO catalyzes two reactions: the carboxylation of D-ribulose 1,5-bisphosphate, the primary event in carbon dioxide fixation, as well as the oxidative fragmentation of the pentose substrate in the photorespiration process. Both reactions occur simultaneously and in competition at the same active site. The chain is Ribulose bisphosphate carboxylase large chain from Staurastrum punctulatum (Green alga).